Here is a 259-residue protein sequence, read N- to C-terminus: Chaplin-C (259 aa).

An N-terminal signal peptide occupies residues 1-28 (MRQATRKGLMTMAAATGVIAAAGGAAHA). One can recognise a Chaplin 1 domain in the interval 39 to 79 (SPGVLSGNTVQAPVHVPVNVCGNTVDVVGVLNPAMGNACAN). Positions 84–112 (ASGGHGGHGGHGGYGDSGGEGGSHGGSHA) are enriched in gly residues. 2 disordered regions span residues 84 to 129 (ASGG…NHVE) and 154 to 227 (GNDC…ALAE). Residues 119-159 (SPGVGSGNHVEVPIDVPVNVCGNSIDVVGALNPTTGNDCGN) enclose the Chaplin 2 domain. The segment covering 180-189 (HNPGNPGNPD) has biased composition (low complexity). An LPXTG sorting signal motif is present at residues 225–229 (LAETG). Residue threonine 228 is modified to Pentaglycyl murein peptidoglycan amidated threonine. Positions 229–259 (GSDLPLGLALPVGAGALLAGTVLYRKARASV) are cleaved as a propeptide — removed by sortase.

It belongs to the chaplin family. Long chaplin subfamily.

It is found in the secreted. It localises to the cell wall. In terms of biological role, one of 8 partially redundant surface-active proteins required for efficient formation of aerial mycelium; the short chaplins assemble into a hydrophobic, amyloidal fibrillar surface layer that envelopes and protects aerial hyphae and spores, presumably anchored to the long chaplins. Chaplins have an overlapping function with the surface-active SapB peptide; chaplins are essential on minimal medium while on rich medium both chaplins and SapB are required for efficient aerial hyphae formation. A minimal chaplin strain capable of forming aerial mycelium/hyphae on minimal medium contains ChpC, ChpE and ChpH. The strain also has restored rodlet formation on the hyphae surface. The long chaplins (ChpA, ChpB, ChpC) are not absolutely necessary for short chaplin localization or rodlet formation, but probably play a role in initiating aerial hyphae development. Chaplins are also involved in cell attachment to a hydrophobic surface. The protein is Chaplin-C of Streptomyces coelicolor (strain ATCC BAA-471 / A3(2) / M145).